A 93-amino-acid chain; its full sequence is Cytochrome c oxidase polypeptide 6, mitochondrial (93 aa).

The Mitochondrial matrix portion of the chain corresponds to 2 to 33 (STGNESYNLRYPKGFKGYPYNMYKLEGYGTPK). Residues 34-53 (GYITLIGVVATLTVSGLFFA) form a helical membrane-spanning segment. Topologically, residues 54-93 (KTRSNKREYPTHNKEWRAKTLAYAKETNADPIYQLPKDKI) are mitochondrial intermembrane.

This sequence belongs to the cytochrome c oxidase IV family. As to quaternary structure, component of the cytochrome c oxidase (complex IV, CIV), a multisubunit enzyme composed of a catalytic core of 3 subunits and seevral supernumerary subunits. The complex exists as a monomer or a dimer and forms supercomplexes (SCs) in the inner mitochondrial membrane with ubiquinol-cytochrome c oxidoreductase (cytochrome b-c1 complex, complex III, CIII).

It localises to the mitochondrion inner membrane. It functions in the pathway energy metabolism; oxidative phosphorylation. Its function is as follows. Component of the cytochrome c oxidase, the last enzyme in the mitochondrial electron transport chain which drives oxidative phosphorylation. The respiratory chain contains 3 multisubunit complexes succinate dehydrogenase (complex II, CII), ubiquinol-cytochrome c oxidoreductase (cytochrome b-c1 complex, complex III, CIII) and cytochrome c oxidase (complex IV, CIV), that cooperate to transfer electrons derived from NADH and succinate to molecular oxygen, creating an electrochemical gradient over the inner membrane that drives transmembrane transport and the ATP synthase. Cytochrome c oxidase is the component of the respiratory chain that catalyzes the reduction of oxygen to water. Electrons originating from reduced cytochrome c in the intermembrane space (IMS) are transferred via the dinuclear copper A center (CU(A)) of subunit 2 and heme A of subunit 1 to the active site in subunit 1, a binuclear center (BNC) formed by heme A3 and copper B (CU(B)). The BNC reduces molecular oxygen to 2 water molecules using 4 electrons from cytochrome c in the IMS and 4 protons from the mitochondrial matrix. This is Cytochrome c oxidase polypeptide 6, mitochondrial (cxfA) from Dictyostelium discoideum (Social amoeba).